A 1198-amino-acid chain; its full sequence is Fibronectin type-III domain-containing protein 3A (1198 aa).

Residues 188 to 201 (KKLKDRQGTQKDKM) are compositionally biased toward basic and acidic residues. A disordered region spans residues 188-257 (KKLKDRQGTQ…VDPEMEEKDE (70 aa)). A phosphoserine mark is found at Ser203, Ser207, and Ser213. Fibronectin type-III domains are found at residues 268 to 369 (NIVK…TLSC), 373 to 465 (PPNA…TSGC), 469 to 562 (VPAS…TCPD), 566 to 660 (VPVK…TPAV), 664 to 757 (PCLP…TAPG), 761 to 851 (QCRP…TPPS), 863 to 950 (SDDD…TKPL), 951 to 1045 (PPDP…TPKS), and 1049 to 1151 (ALKA…TEPP). Lys384 is subject to N6-acetyllysine. A helical transmembrane segment spans residues 1177 to 1197 (ILVVFAFFSILIAFIIQYFVI).

The protein belongs to the FNDC3 family. As to expression, testis. Localizes to the acrosome of spermatids, as well as to Leydig cells. Can be detected on the acrosome beginning at steps 2-3 and continuing until step 12 of spermiogenesis.

The protein localises to the golgi apparatus membrane. Its function is as follows. Mediates spermatid-Sertoli adhesion during spermatogenesis. This is Fibronectin type-III domain-containing protein 3A (Fndc3a) from Mus musculus (Mouse).